Here is a 145-residue protein sequence, read N- to C-terminus: Large ribosomal subunit protein uL11 (145 aa).

This sequence belongs to the universal ribosomal protein uL11 family. Part of the ribosomal stalk of the 50S ribosomal subunit. Interacts with L10 and the large rRNA to form the base of the stalk. L10 forms an elongated spine to which L12 dimers bind in a sequential fashion forming a multimeric L10(L12)X complex. Post-translationally, one or more lysine residues are methylated.

Forms part of the ribosomal stalk which helps the ribosome interact with GTP-bound translation factors. This is Large ribosomal subunit protein uL11 from Hydrogenobaculum sp. (strain Y04AAS1).